Consider the following 180-residue polypeptide: Signal peptidase complex subunit 2 (180 aa).

Residues 1–45 (MSDERITVVNKWDGPTVKNGLDEVVKKILNDKVGWTEQHNLMNLR) are Cytoplasmic-facing. Residues 46 to 66 (LLISFIGVAFSAFACGYDFYA) form a helical membrane-spanning segment. Topologically, residues 67-72 (PFPKSK) are lumenal. The chain crosses the membrane as a helical span at residues 73-93 (IVLLVCSVSYFICMGVLQLFQ). At 94-180 (WYVEKDCFYE…LWARLIRSEQ (87 aa)) the chain is on the cytoplasmic side.

The protein belongs to the SPCS2 family. As to quaternary structure, component of the signal peptidase complex (SPC) composed of a catalytic subunit sec-11 and three accessory subunits spcs-1, spcs-2 and spcs-3. The complex induces a local thinning of the ER membrane which is used to measure the length of the signal peptide (SP) h-region of protein substrates. This ensures the selectivity of the complex towards h-regions shorter than 18-20 amino acids.

It localises to the endoplasmic reticulum membrane. Functionally, component of the signal peptidase complex (SPC) which catalyzes the cleavage of N-terminal signal sequences from nascent proteins as they are translocated into the lumen of the endoplasmic reticulum. Enhances the enzymatic activity of SPC and facilitates the interactions between different components of the translocation site. The chain is Signal peptidase complex subunit 2 from Caenorhabditis briggsae.